The primary structure comprises 192 residues: NF-kappa-B inhibitor-interacting Ras-like protein 1 (192 aa).

11–18 (GLLSVGKT) contributes to the GTP binding site. An Effector region motif is present at residues 35–43 (DCETMEDVY). The segment at 58 to 93 (HLYDTRGLQEGVELPKHYFSFADGFVLVYSVNNLES) is interactions with NFKBIA and NFKBIB. GTP-binding positions include 61–65 (DTRGL) and 120–123 (NKID). A disordered region spans residues 168-192 (LSQPQSKSSFPLPGRKNKGNSNSEN).

It belongs to the small GTPase superfamily. Ras family. KappaB-Ras subfamily. Interacts with both NF-kappa-B inhibitor alpha (NFKBIA) and beta (NFKBIB) in vitro. However, it probably only interacts with NFKBIB in vivo. Forms a complex with NFKBIB and NF-kappa-B heterodimer (p50/NFKB1 and p65/RELA). Also interacts with c-Rel (REL). As to expression, widely expressed.

The protein localises to the cytoplasm. In terms of biological role, atypical Ras-like protein that acts as a potent regulator of NF-kappa-B activity by preventing the degradation of NF-kappa-B inhibitor beta (NFKBIB) by most signals, explaining why NFKBIB is more resistant to degradation. May act by blocking phosphorylation of NFKBIB and mediating cytoplasmic retention of p65/RELA NF-kappa-B subunit. It is unclear whether it acts as a GTPase. Both GTP- and GDP-bound forms block phosphorylation of NFKBIB. In Homo sapiens (Human), this protein is NF-kappa-B inhibitor-interacting Ras-like protein 1 (NKIRAS1).